The primary structure comprises 176 residues: ATP-dependent protease subunit HslV (176 aa).

Thr6 is a catalytic residue. Na(+) is bound by residues Ser161, Cys164, and Thr167.

It belongs to the peptidase T1B family. HslV subfamily. A double ring-shaped homohexamer of HslV is capped on each side by a ring-shaped HslU homohexamer. The assembly of the HslU/HslV complex is dependent on binding of ATP.

The protein localises to the cytoplasm. The catalysed reaction is ATP-dependent cleavage of peptide bonds with broad specificity.. Allosterically activated by HslU binding. Protease subunit of a proteasome-like degradation complex believed to be a general protein degrading machinery. The polypeptide is ATP-dependent protease subunit HslV (Thermosipho africanus (strain TCF52B)).